An 82-amino-acid polypeptide reads, in one-letter code: Cytochrome b-c1 complex subunit 8 (82 aa).

Residues 1–39 (MGREFGNLTRMRHVISYSLSPFEQRAHPHVFTKGIPNVL) lie on the Mitochondrial matrix side of the membrane. Ser-16 is subject to Phosphoserine. An N6-acetyllysine; alternate modification is found at Lys-33. Lys-33 carries the N6-succinyllysine; alternate modification. A helical transmembrane segment spans residues 40-68 (RRFRESFFRVAPQFVVFYLIYTWGTEEFE). The Mitochondrial intermembrane portion of the chain corresponds to 69 to 82 (RSKRKNPAAYENDK).

It belongs to the UQCRQ/QCR8 family. In terms of assembly, component of the ubiquinol-cytochrome c oxidoreductase (cytochrome b-c1 complex, complex III, CIII), a multisubunit enzyme composed of 11 subunits. The complex is composed of 3 respiratory subunits cytochrome b, cytochrome c1 and Rieske protein UQCRFS1, 2 core protein subunits UQCRC1/QCR1 and UQCRC2/QCR2, and 6 low-molecular weight protein subunits UQCRH/QCR6, UQCRB/QCR7, UQCRQ/QCR8, UQCR10/QCR9, UQCR11/QCR10 and subunit 9, the cleavage product of Rieske protein UQCRFS1. The complex exists as an obligatory dimer and forms supercomplexes (SCs) in the inner mitochondrial membrane with NADH-ubiquinone oxidoreductase (complex I, CI) and cytochrome c oxidase (complex IV, CIV), resulting in different assemblies (supercomplex SCI(1)III(2)IV(1) and megacomplex MCI(2)III(2)IV(2)). Interacts with UQCC6.

The protein resides in the mitochondrion inner membrane. Functionally, component of the ubiquinol-cytochrome c oxidoreductase, a multisubunit transmembrane complex that is part of the mitochondrial electron transport chain which drives oxidative phosphorylation. The respiratory chain contains 3 multisubunit complexes succinate dehydrogenase (complex II, CII), ubiquinol-cytochrome c oxidoreductase (cytochrome b-c1 complex, complex III, CIII) and cytochrome c oxidase (complex IV, CIV), that cooperate to transfer electrons derived from NADH and succinate to molecular oxygen, creating an electrochemical gradient over the inner membrane that drives transmembrane transport and the ATP synthase. The cytochrome b-c1 complex catalyzes electron transfer from ubiquinol to cytochrome c, linking this redox reaction to translocation of protons across the mitochondrial inner membrane, with protons being carried across the membrane as hydrogens on the quinol. In the process called Q cycle, 2 protons are consumed from the matrix, 4 protons are released into the intermembrane space and 2 electrons are passed to cytochrome c. The protein is Cytochrome b-c1 complex subunit 8 (UQCRQ) of Pongo abelii (Sumatran orangutan).